A 58-amino-acid chain; its full sequence is Large ribosomal subunit protein uL30 (58 aa).

The protein belongs to the universal ribosomal protein uL30 family. As to quaternary structure, part of the 50S ribosomal subunit.

In Pseudomonas putida (strain W619), this protein is Large ribosomal subunit protein uL30.